The chain runs to 173 residues: Putative MgpC-like protein MPN_092 (173 aa).

It belongs to the MgpC family.

The protein is Putative MgpC-like protein MPN_092 of Mycoplasma pneumoniae (strain ATCC 29342 / M129 / Subtype 1) (Mycoplasmoides pneumoniae).